Consider the following 198-residue polypeptide: Recombination protein RecR (198 aa).

The segment at 56–71 adopts a C4-type zinc-finger fold; that stretch reads CKICHSLTENEICDIC. Positions 79 to 174 constitute a Toprim domain; it reads HLLCVVESPA…HMTRIAQGVP (96 aa).

The protein belongs to the RecR family.

Its function is as follows. May play a role in DNA repair. It seems to be involved in an RecBC-independent recombinational process of DNA repair. It may act with RecF and RecO. This chain is Recombination protein RecR, found in Acinetobacter baylyi (strain ATCC 33305 / BD413 / ADP1).